Reading from the N-terminus, the 156-residue chain is ATP synthase subunit b (156 aa).

A helical membrane pass occupies residues 7–27 (LFAQMVVFLILAWFTMKFVWP).

It belongs to the ATPase B chain family. In terms of assembly, F-type ATPases have 2 components, F(1) - the catalytic core - and F(0) - the membrane proton channel. F(1) has five subunits: alpha(3), beta(3), gamma(1), delta(1), epsilon(1). F(0) has three main subunits: a(1), b(2) and c(10-14). The alpha and beta chains form an alternating ring which encloses part of the gamma chain. F(1) is attached to F(0) by a central stalk formed by the gamma and epsilon chains, while a peripheral stalk is formed by the delta and b chains.

It is found in the cell inner membrane. Its function is as follows. F(1)F(0) ATP synthase produces ATP from ADP in the presence of a proton or sodium gradient. F-type ATPases consist of two structural domains, F(1) containing the extramembraneous catalytic core and F(0) containing the membrane proton channel, linked together by a central stalk and a peripheral stalk. During catalysis, ATP synthesis in the catalytic domain of F(1) is coupled via a rotary mechanism of the central stalk subunits to proton translocation. Functionally, component of the F(0) channel, it forms part of the peripheral stalk, linking F(1) to F(0). This is ATP synthase subunit b from Paraburkholderia xenovorans (strain LB400).